The sequence spans 1037 residues: Ras guanine nucleotide exchange factor E (1037 aa).

Residues 5–35 (ECNNRIEYLQNKVLELESLNENLKGQLEYFQ) are a coiled coil. 8 disordered regions span residues 65–100 (NNNN…TTNN), 114–150 (TNSN…ELSN), 166–387 (TTTT…PLSN), 414–437 (TVNM…LYHS), 451–472 (SSLS…LTNP), 602–628 (INSN…NQLE), 907–935 (NTTT…QQLN), and 1004–1037 (EKET…SFKS). Composition is skewed to low complexity over residues 114-145 (TNSN…NNSN) and 166-200 (TTTT…NNNN). The span at 229 to 239 (PTSSRNSPTNK) shows a compositional bias: polar residues. Positions 240 to 276 (SSPQFLSPLSKSPLSQSTQSTTVSSPSPSWTTTVPQS) are enriched in low complexity. The span at 282–300 (TIVQSKSPYSPDTNISNKL) shows a compositional bias: polar residues. The span at 318-360 (SPSKNSPRSLNSNNNNSSATTSITTPPTTSTPTPTTSTTTTTT) shows a compositional bias: low complexity. The segment covering 361 to 370 (TERRPEDRRS) has biased composition (basic and acidic residues). Composition is skewed to polar residues over residues 372–387 (TSPF…PLSN) and 424–437 (PRSN…LYHS). The N-terminal Ras-GEF domain maps to 496 to 694 (NGFIVKGGTI…NLKRLLTNDR (199 aa)). A Ras-GEF domain is found at 726–1003 (DPTEIARQLT…YKLSLICEPK (278 aa)). A compositionally biased stretch (low complexity) spans 907–930 (NTTTTTTTTTTTTTTNTTTSNNNN). Residues 1027-1037 (SVTSLLNSFKS) are compositionally biased toward polar residues.

In terms of biological role, promotes the exchange of Ras-bound GDP by GTP. Seems to play a role in chemotaxis. In Dictyostelium discoideum (Social amoeba), this protein is Ras guanine nucleotide exchange factor E (gefE).